Reading from the N-terminus, the 78-residue chain is Exodeoxyribonuclease 7 small subunit (78 aa).

This sequence belongs to the XseB family. As to quaternary structure, heterooligomer composed of large and small subunits.

The protein resides in the cytoplasm. It catalyses the reaction Exonucleolytic cleavage in either 5'- to 3'- or 3'- to 5'-direction to yield nucleoside 5'-phosphates.. Bidirectionally degrades single-stranded DNA into large acid-insoluble oligonucleotides, which are then degraded further into small acid-soluble oligonucleotides. This Mycobacterium leprae (strain TN) protein is Exodeoxyribonuclease 7 small subunit.